The sequence spans 438 residues: Phosphoribosylamine--glycine ligase (438 aa).

An ATP-grasp domain is found at 107–319 (RKLFEDYDIP…LAKISKQIVD (213 aa)). Residue 134–197 (IDNFDEPVVV…EELLLGEEYT (64 aa)) participates in ATP binding. Mg(2+)-binding residues include Gln-277, Glu-289, and Asn-291. Residues Gln-277, Glu-289, and Asn-291 each contribute to the Mn(2+) site.

Belongs to the GARS family. Mg(2+) serves as cofactor. Requires Mn(2+) as cofactor.

The enzyme catalyses 5-phospho-beta-D-ribosylamine + glycine + ATP = N(1)-(5-phospho-beta-D-ribosyl)glycinamide + ADP + phosphate + H(+). It participates in purine metabolism; IMP biosynthesis via de novo pathway; N(1)-(5-phospho-D-ribosyl)glycinamide from 5-phospho-alpha-D-ribose 1-diphosphate: step 2/2. The chain is Phosphoribosylamine--glycine ligase from Methanosphaera stadtmanae (strain ATCC 43021 / DSM 3091 / JCM 11832 / MCB-3).